Consider the following 343-residue polypeptide: Putative outer membrane protein y4fJ (343 aa).

The signal sequence occupies residues 1-17 (MRMNFSTVLLGSSVALA).

Belongs to the alphaproteobacteria porin family.

The protein localises to the cell outer membrane. Functionally, may act as an outer membrane pore. The sequence is that of Putative outer membrane protein y4fJ from Sinorhizobium fredii (strain NBRC 101917 / NGR234).